The following is a 75-amino-acid chain: Exodeoxyribonuclease 7 small subunit (75 aa).

The protein belongs to the XseB family. Heterooligomer composed of large and small subunits.

It localises to the cytoplasm. The enzyme catalyses Exonucleolytic cleavage in either 5'- to 3'- or 3'- to 5'-direction to yield nucleoside 5'-phosphates.. Bidirectionally degrades single-stranded DNA into large acid-insoluble oligonucleotides, which are then degraded further into small acid-soluble oligonucleotides. This Chlamydia felis (strain Fe/C-56) (Chlamydophila felis) protein is Exodeoxyribonuclease 7 small subunit.